The sequence spans 288 residues: Polyamine aminopropyltransferase (288 aa).

Residues 9-238 form the PABS domain; sequence ETLHDQFGQY…GIMTFAWATD (230 aa). Residue Gln33 coordinates S-methyl-5'-thioadenosine. Spermidine is bound by residues His64 and Asp88. S-methyl-5'-thioadenosine contacts are provided by residues Glu108 and 140-141; that span reads DG. Asp158 functions as the Proton acceptor in the catalytic mechanism. 158–161 is a spermidine binding site; the sequence is DCTD. Pro165 is a binding site for S-methyl-5'-thioadenosine.

Belongs to the spermidine/spermine synthase family. In terms of assembly, homodimer or homotetramer.

It is found in the cytoplasm. It carries out the reaction S-adenosyl 3-(methylsulfanyl)propylamine + putrescine = S-methyl-5'-thioadenosine + spermidine + H(+). Its pathway is amine and polyamine biosynthesis; spermidine biosynthesis; spermidine from putrescine: step 1/1. Catalyzes the irreversible transfer of a propylamine group from the amino donor S-adenosylmethioninamine (decarboxy-AdoMet) to putrescine (1,4-diaminobutane) to yield spermidine. In Escherichia coli (strain ATCC 8739 / DSM 1576 / NBRC 3972 / NCIMB 8545 / WDCM 00012 / Crooks), this protein is Polyamine aminopropyltransferase.